The chain runs to 203 residues: Thymidine kinase (203 aa).

Residues 9–16 (ATMNAGKT) and 87–90 (DEAQ) contribute to the ATP site. Catalysis depends on Glu88, which acts as the Proton acceptor. 4 residues coordinate Zn(2+): Cys145, Cys147, Cys181, and His184.

Belongs to the thymidine kinase family. Homotetramer.

Its subcellular location is the cytoplasm. The enzyme catalyses thymidine + ATP = dTMP + ADP + H(+). The chain is Thymidine kinase from Mesorhizobium japonicum (strain LMG 29417 / CECT 9101 / MAFF 303099) (Mesorhizobium loti (strain MAFF 303099)).